The chain runs to 359 residues: Phospho-N-acetylmuramoyl-pentapeptide-transferase (359 aa).

10 helical membrane passes run Ile-27–Thr-47, Val-71–Ala-91, Leu-93–Ala-113, Leu-134–Tyr-154, Leu-170–Asn-190, Met-203–Ala-223, Ser-234–Phe-254, Phe-262–Ile-282, Phe-286–Val-306, and Lys-336–Leu-356.

The protein belongs to the glycosyltransferase 4 family. MraY subfamily. Mg(2+) is required as a cofactor.

The protein localises to the cell inner membrane. The catalysed reaction is UDP-N-acetyl-alpha-D-muramoyl-L-alanyl-gamma-D-glutamyl-meso-2,6-diaminopimeloyl-D-alanyl-D-alanine + di-trans,octa-cis-undecaprenyl phosphate = di-trans,octa-cis-undecaprenyl diphospho-N-acetyl-alpha-D-muramoyl-L-alanyl-D-glutamyl-meso-2,6-diaminopimeloyl-D-alanyl-D-alanine + UMP. It participates in cell wall biogenesis; peptidoglycan biosynthesis. Its function is as follows. Catalyzes the initial step of the lipid cycle reactions in the biosynthesis of the cell wall peptidoglycan: transfers peptidoglycan precursor phospho-MurNAc-pentapeptide from UDP-MurNAc-pentapeptide onto the lipid carrier undecaprenyl phosphate, yielding undecaprenyl-pyrophosphoryl-MurNAc-pentapeptide, known as lipid I. The sequence is that of Phospho-N-acetylmuramoyl-pentapeptide-transferase from Desulfotalea psychrophila (strain LSv54 / DSM 12343).